The following is a 496-amino-acid chain: Xylulose kinase (496 aa).

83 to 84 (MH) contacts substrate. Catalysis depends on aspartate 237, which acts as the Proton acceptor.

The protein belongs to the FGGY kinase family.

It catalyses the reaction D-xylulose + ATP = D-xylulose 5-phosphate + ADP + H(+). Functionally, catalyzes the phosphorylation of D-xylulose to D-xylulose 5-phosphate. The sequence is that of Xylulose kinase from Staphylococcus epidermidis (strain ATCC 12228 / FDA PCI 1200).